The primary structure comprises 334 residues: Dual specificity mitogen-activated protein kinase kinase 6 (334 aa).

Residues 1–11 show a composition bias toward basic residues; it reads MSQSKGKKRNP. Residues 1–34 form a disordered region; it reads MSQSKGKKRNPGLKIPKEAFEQPQTSSTPPRDLD. The segment at 4 to 19 is d domain; that stretch reads SKGKKRNPGLKIPKEA. Positions 53 to 314 constitute a Protein kinase domain; it reads LEPIVELGRG…YPELMQHPFF (262 aa). Residues 59–67 and Lys-82 each bind ATP; that span reads LGRGAYGVV. Asp-179 functions as the Proton acceptor in the catalytic mechanism. Phosphoserine; by MAPK3 is present on Ser-207. Thr-211 carries the phosphothreonine; by MAPK3 modification. Residues 311-334 form a DVD domain region; sequence HPFFTLHESKATDVASFVKSILGD.

Belongs to the protein kinase superfamily. STE Ser/Thr protein kinase family. MAP kinase kinase subfamily. As to quaternary structure, dimer. Interacts (via its D domain) with its substrates MAPK11, MAPK12, MAPK13 and MAPK14. Interacts (via its DVD domain) with MAP3Ks activators like MAP3K5/ASK1, MAP3K1/MEKK1, MAP3K2/MEKK2, MAP3K3/MEKK3, MAP3K4/MEKK4, MAP3K7/TAK1, MAP3K11/MLK3 and MAP3K17/TAOK2. Interacts with DCTN1. Interacts with EIF2AK2/PKR. Weakly autophosphorylated. Phosphorylated at Ser-207 and Thr-211 by the majority of M3Ks, such as MAP3K5/ASK1, MAP3K1/MEKK1, MAP3K2/MEKK2, MAP3K3/MEKK3, MAP3K4/MEKK4, MAP3K7/TAK1, MAP3K11/MLK3 and MAP3K17/TAOK2. Post-translationally, in response to genotoxic stress, MAP3K-phosphorylated MAP2K6 is ubiquitinated and degraded by the SCF(FBXO31) complex.

It is found in the nucleus. The protein localises to the cytoplasm. It localises to the cytoskeleton. The enzyme catalyses L-seryl-[protein] + ATP = O-phospho-L-seryl-[protein] + ADP + H(+). It catalyses the reaction L-threonyl-[protein] + ATP = O-phospho-L-threonyl-[protein] + ADP + H(+). It carries out the reaction L-tyrosyl-[protein] + ATP = O-phospho-L-tyrosyl-[protein] + ADP + H(+). Its activity is regulated as follows. Activated by dual phosphorylation on Ser-207 and Thr-211 in response to a variety of cellular stresses, including UV radiation, osmotic shock, hypoxia, inflammatory cytokines, interferon gamma (IFNG), and less often by growth factors. MAP2K6/MKK6 is activated by the majority of M3Ks, such as MAP3K5/ASK1, MAP3K1/MEKK1, MAP3K2/MEKK2, MAP3K3/MEKK3, MAP3K4/MEKK4, MAP3K7/TAK1, MAP3K11/MLK3 and MAP3K17/TAOK2. Its function is as follows. Dual specificity protein kinase which acts as an essential component of the MAP kinase signal transduction pathway. With MAP3K3/MKK3, catalyzes the concomitant phosphorylation of a threonine and a tyrosine residue in the MAP kinases p38 MAPK11, MAPK12, MAPK13 and MAPK14 and plays an important role in the regulation of cellular responses to cytokines and all kinds of stresses. Especially, MAP2K3/MKK3 and MAP2K6/MKK6 are both essential for the activation of MAPK11 and MAPK13 induced by environmental stress, whereas MAP2K6/MKK6 is the major MAPK11 activator in response to TNF. MAP2K6/MKK6 also phosphorylates and activates PAK6. The p38 MAP kinase signal transduction pathway leads to direct activation of transcription factors. Nuclear targets of p38 MAP kinase include the transcription factors ATF2 and ELK1. Within the p38 MAPK signal transduction pathway, MAP3K6/MKK6 mediates phosphorylation of STAT4 through MAPK14 activation, and is therefore required for STAT4 activation and STAT4-regulated gene expression in response to IL-12 stimulation. The pathway is also crucial for IL-6-induced SOCS3 expression and down-regulation of IL-6-mediated gene induction; and for IFNG-dependent gene transcription. Has a role in osteoclast differentiation through NF-kappa-B transactivation by TNFSF11, and in endochondral ossification and since SOX9 is another likely downstream target of the p38 MAPK pathway. MAP2K6/MKK6 mediates apoptotic cell death in thymocytes. Acts also as a regulator for melanocytes dendricity, through the modulation of Rho family GTPases. In Bos taurus (Bovine), this protein is Dual specificity mitogen-activated protein kinase kinase 6 (MAP2K6).